Consider the following 602-residue polypeptide: uncharacterized protein (602 aa).

In terms of domain architecture, Helicase ATP-binding spans Q51 to D210. The segment covering P430–L439 has biased composition (basic and acidic residues). 2 disordered regions span residues P430–G452 and R518–H538. Positions K523 to S534 are enriched in polar residues.

This sequence to M.leprae ML1624.

This is an uncharacterized protein from Mycobacterium tuberculosis (strain ATCC 25618 / H37Rv).